The following is a 702-amino-acid chain: ATP-dependent zinc metalloprotease FtsH (702 aa).

Over 1–26 (MKKRNKGLVEQTTTEKNNFSRKTAWK) the chain is Cytoplasmic. The chain crosses the membrane as a helical span at residues 27–47 (VFWWVIILAVVIGVLAYIFSP). The Extracellular portion of the chain corresponds to 48-175 (RAATAVVESW…FIAPDTRARD (128 aa)). A helical transmembrane segment spans residues 176–196 (VLNGLFGLLPIIIFVVFFLLF). Topologically, residues 197–702 (WRSARGISAG…EVKPESETNS (506 aa)) are cytoplasmic. Residue 271–278 (GPPGTGKT) participates in ATP binding. Histidine 493 lines the Zn(2+) pocket. The active site involves glutamate 494. Residues histidine 497 and aspartate 572 each coordinate Zn(2+). The segment at 682–702 (EQQAKQKLNKSEVKPESETNS) is disordered. The span at 690–702 (NKSEVKPESETNS) shows a compositional bias: basic and acidic residues.

In the central section; belongs to the AAA ATPase family. The protein in the C-terminal section; belongs to the peptidase M41 family. Homohexamer. Requires Zn(2+) as cofactor.

The protein resides in the cell membrane. Its function is as follows. Acts as a processive, ATP-dependent zinc metallopeptidase for both cytoplasmic and membrane proteins. Plays a role in the quality control of integral membrane proteins. The chain is ATP-dependent zinc metalloprotease FtsH from Mycoplasma genitalium (strain ATCC 33530 / DSM 19775 / NCTC 10195 / G37) (Mycoplasmoides genitalium).